The following is a 764-amino-acid chain: MRPTPLLRLALLLVLPSSLWGERCPSPPCECRQEDDFRVTCKDIQRIPSLPPSTQTLKFIETHLKTIPSRAFSNLPNISRIYLSIDATLQQLESHSFYNLSKVTHIEIRNTRSLTYIDSGALKELPLLKFLGIFNTGLRVFPDLTKIYSTDVFFILEITDNPYMTSVPANAFQGLSNETLTLKLYNNGFTSIQGHAFNGTKLDAVYLNKNKYLTVIDQDAFAGVYSGPTLLDISYTSVTALPSKGLEHLKELIARNTWTLKKLPLSLSFLHLTRADLSYPSHCCAFKNQKNIRGILQSLMCNESSIWGLRQRKSASALNGPFYQEYEEDLGDGSAGYKENSKFQDTHSNSHYYVFFEDQEDEIIGFGQELKNPQEETLQAFDNHYDYTVCGGSEEMVCTPKSDEFNPCEDIMGYKFLRIVVWFVSLLALLGNVFVLVILLTSHYKLTVPRFLMCNLAFADFCMGLYLLLIASVDLYTQSEYYNHAIDWQTGPGCNTAGFFTVFASELSVYTLTVITLERWYAITFAMHLDRKIRLWHAYVIMLGGWVCCFLLALLPLVGISSYAKVSICLPMDTETPLALAYIILVLLLNIIAFIIVCACYVKIYITVRNPHYNPGDKDTRIAKRMAVLIFTDFMCMAPISFYALSALMNKPLITVTNSKILLVLFYPLNSCANPFLYAIFTKAFQRDVFMLLSKFGICKRQAQAYRGQRVSSKNSTGIRVQKVPPDVRQSLPNVQDDYELLGNSHLTPKQQDQTSKEYKQTVL.

The N-terminal stretch at 1–21 (MRPTPLLRLALLLVLPSSLWG) is a signal peptide. The Extracellular portion of the chain corresponds to 22–413 (ERCPSPPCEC…EFNPCEDIMG (392 aa)). A disulfide bridge links Cys-31 with Cys-41. An LRR 1 repeat occupies 51–74 (PPSTQTLKFIETHLKTIPSRAFSN). 2 N-linked (GlcNAc...) asparagine glycosylation sites follow: Asn-77 and Asn-99. LRR repeat units lie at residues 125 to 150 (LPLL…IYST), 152 to 174 (VFFI…AFQG), 176 to 199 (SNET…AFNG), 201 to 223 (KLDA…AFAG), and 225 to 248 (YSGP…GLEH). Residues Asn-177 and Asn-198 are each glycosylated (N-linked (GlcNAc...) asparagine). Asn-302 carries N-linked (GlcNAc...) asparagine glycosylation. Tyr-385 is subject to Sulfotyrosine. A helical membrane pass occupies residues 414-441 (YKFLRIVVWFVSLLALLGNVFVLVILLT). Over 442-450 (SHYKLTVPR) the chain is Cytoplasmic. Residues 451 to 473 (FLMCNLAFADFCMGLYLLLIASV) form a helical membrane-spanning segment. Residues 474–494 (DLYTQSEYYNHAIDWQTGPGC) lie on the Extracellular side of the membrane. An intrachain disulfide couples Cys-494 to Cys-569. A helical membrane pass occupies residues 495–517 (NTAGFFTVFASELSVYTLTVITL). At 518–537 (ERWYAITFAMHLDRKIRLWH) the chain is on the cytoplasmic side. Residues 538-560 (AYVIMLGGWVCCFLLALLPLVGI) traverse the membrane as a helical segment. The Extracellular segment spans residues 561–580 (SSYAKVSICLPMDTETPLAL). Residues 581-602 (AYIILVLLLNIIAFIIVCACYV) form a helical membrane-spanning segment. At 603 to 625 (KIYITVRNPHYNPGDKDTRIAKR) the chain is on the cytoplasmic side. A helical transmembrane segment spans residues 626-649 (MAVLIFTDFMCMAPISFYALSALM). Over 650–660 (NKPLITVTNSK) the chain is Extracellular. The chain crosses the membrane as a helical span at residues 661 to 682 (ILLVLFYPLNSCANPFLYAIFT). Topologically, residues 683–764 (KAFQRDVFML…TSKEYKQTVL (82 aa)) are cytoplasmic. The short motif at 762-764 (TVL) is the PDZ-binding element.

This sequence belongs to the G-protein coupled receptor 1 family. FSH/LSH/TSH subfamily. As to quaternary structure, interacts with heterodimer GPHA2:GPHB5; this interaction stimulates cAMP production. Interacts (via the PDZ-binding motif) with SCRIB; regulates TSHR trafficking and function. Post-translationally, glycosylated. Sulfated. Sulfation on Tyr-385 plays a role in thyrotropin receptor binding and activation.

It localises to the cell membrane. Its subcellular location is the basolateral cell membrane. Receptor for the thyroid-stimulating hormone (TSH) or thyrotropin. Also acts as a receptor for the heterodimeric glycoprotein hormone (GPHA2:GPHB5) or thyrostimulin. The activity of this receptor is mediated by G proteins which activate adenylate cyclase. Plays a central role in controlling thyroid cell metabolism. The protein is Thyrotropin receptor (TSHR) of Ovis aries (Sheep).